Consider the following 261-residue polypeptide: Cytochrome c oxidase subunit 3 (261 aa).

Topologically, residues 1–15 are mitochondrial matrix; it reads MTHQTHAYHMVNPSP. The chain crosses the membrane as a helical span at residues 16–34; sequence WPLTGALSALLMTSGLAMW. Residues 35-40 lie on the Mitochondrial intermembrane side of the membrane; sequence FHFNST. A helical transmembrane segment spans residues 41–66; the sequence is LLLAMGLLTNILTMYQWWRDIIREST. Residues 67–72 are Mitochondrial matrix-facing; sequence FQGHHT. Residues 73 to 105 form a helical membrane-spanning segment; the sequence is SIVQKGLRYGMILFIISEVFFFSGFFWAFYHSS. Residues 106–128 lie on the Mitochondrial intermembrane side of the membrane; that stretch reads LAPTPELGGCWPPTGIHPLNPLE. The chain crosses the membrane as a helical span at residues 129–152; it reads VPLLNTSVLLASGVSITWAHHSLM. Residues 153 to 155 lie on the Mitochondrial matrix side of the membrane; it reads EGN. The helical transmembrane segment at 156–183 threads the bilayer; that stretch reads RKNMLQGLFITISLGVYFTLLQASEYYE. Over 184–190 the chain is Mitochondrial intermembrane; the sequence is ASFTISD. Residues 191–223 form a helical membrane-spanning segment; the sequence is GVYGSTFFVATGFHGLHVIIGSTFLIVCFLRQL. The Mitochondrial matrix segment spans residues 224 to 232; that stretch reads KFHFTSSHH. A helical transmembrane segment spans residues 233-256; sequence FGFEAAAWYWHFVDVVWLFLYVSI. The Mitochondrial intermembrane portion of the chain corresponds to 257 to 261; sequence YWWGS.

It belongs to the cytochrome c oxidase subunit 3 family. As to quaternary structure, component of the cytochrome c oxidase (complex IV, CIV), a multisubunit enzyme composed of 14 subunits. The complex is composed of a catalytic core of 3 subunits MT-CO1, MT-CO2 and MT-CO3, encoded in the mitochondrial DNA, and 11 supernumerary subunits COX4I, COX5A, COX5B, COX6A, COX6B, COX6C, COX7A, COX7B, COX7C, COX8 and NDUFA4, which are encoded in the nuclear genome. The complex exists as a monomer or a dimer and forms supercomplexes (SCs) in the inner mitochondrial membrane with NADH-ubiquinone oxidoreductase (complex I, CI) and ubiquinol-cytochrome c oxidoreductase (cytochrome b-c1 complex, complex III, CIII), resulting in different assemblies (supercomplex SCI(1)III(2)IV(1) and megacomplex MCI(2)III(2)IV(2)).

It localises to the mitochondrion inner membrane. The catalysed reaction is 4 Fe(II)-[cytochrome c] + O2 + 8 H(+)(in) = 4 Fe(III)-[cytochrome c] + 2 H2O + 4 H(+)(out). Functionally, component of the cytochrome c oxidase, the last enzyme in the mitochondrial electron transport chain which drives oxidative phosphorylation. The respiratory chain contains 3 multisubunit complexes succinate dehydrogenase (complex II, CII), ubiquinol-cytochrome c oxidoreductase (cytochrome b-c1 complex, complex III, CIII) and cytochrome c oxidase (complex IV, CIV), that cooperate to transfer electrons derived from NADH and succinate to molecular oxygen, creating an electrochemical gradient over the inner membrane that drives transmembrane transport and the ATP synthase. Cytochrome c oxidase is the component of the respiratory chain that catalyzes the reduction of oxygen to water. Electrons originating from reduced cytochrome c in the intermembrane space (IMS) are transferred via the dinuclear copper A center (CU(A)) of subunit 2 and heme A of subunit 1 to the active site in subunit 1, a binuclear center (BNC) formed by heme A3 and copper B (CU(B)). The BNC reduces molecular oxygen to 2 water molecules using 4 electrons from cytochrome c in the IMS and 4 protons from the mitochondrial matrix. The protein is Cytochrome c oxidase subunit 3 (MT-CO3) of Equus caballus (Horse).